A 365-amino-acid polypeptide reads, in one-letter code: Peptide chain release factor 1 (365 aa).

Gln-236 carries the post-translational modification N5-methylglutamine.

Belongs to the prokaryotic/mitochondrial release factor family. In terms of processing, methylated by PrmC. Methylation increases the termination efficiency of RF1.

It is found in the cytoplasm. In terms of biological role, peptide chain release factor 1 directs the termination of translation in response to the peptide chain termination codons UAG and UAA. This is Peptide chain release factor 1 from Latilactobacillus sakei subsp. sakei (strain 23K) (Lactobacillus sakei subsp. sakei).